Consider the following 827-residue polypeptide: Probable inorganic carbon transporter subunit DabA2 (827 aa).

Zn(2+) contacts are provided by Cys351, Asp353, His524, and Cys539.

The protein belongs to the inorganic carbon transporter (TC 9.A.2) DabA family. In terms of assembly, forms a complex with DabB2, possibly a heterodimer. It depends on Zn(2+) as a cofactor.

It is found in the cell inner membrane. With respect to regulation, uptake of inorganic carbon by cells in the presence of thiosulphate is fully inhibited by the uncouplers carbonyl cyanide m-chlorophenyl hydrazone (CCCP), carbonyl cyanide p-trifluoromethoxyphenyl hydrazone (FCCP), S13 or SF6847. Not inhibited by the ATPase inhibitor N,N-dicyclohexylcarbodiimide (DCCD). Inorganic carbon uptake is inhibited by the ionophore CCCP, suggesting uptake is coupled to a cation gradient. In terms of biological role, part of an energy-coupled inorganic carbon pump; its substrate may be carbon dioxide. Expression of both dabA2 and dabB2 (DAB2) restores growth in ambient air to E.coli deleted of its carbonic anhydrase genes (called CAfree, deletion of 'can' and 'cynT'); neither dabA2 or dabB2 alone is sufficient. Rescue is pH-independent, suggesting it transports CO(2) and not carbonate ions. Together the genes allow greater than normal uptake of inorganic carbon by E.coli. Uptake of carbon dioxide rather than bicarbonate has been suggested based on kinetic calculations. The protein is Probable inorganic carbon transporter subunit DabA2 of Halothiobacillus neapolitanus (strain ATCC 23641 / c2) (Thiobacillus neapolitanus).